Consider the following 93-residue polypeptide: Antitoxin RelF (93 aa).

This sequence belongs to the phD/YefM antitoxin family. As to quaternary structure, interacts with toxin RelG, which neutralizes the toxin. Also interacts with toxins RelE and RelK in vitro, in M.smegmatis coexpression with non-cognate toxins increases the toxicity of RelE but not of RelK.

In terms of biological role, antitoxin component of a type II toxin-antitoxin (TA) system. Upon expression in M.smegmatis neutralizes the effect of toxin RelE2. Its function is as follows. Induces its own promoter, in combination with RelG represses its own promoter. Has been seen to bind DNA in complex with toxin RelG but not alone. The protein is Antitoxin RelF (relF) of Mycobacterium tuberculosis (strain ATCC 25618 / H37Rv).